A 180-amino-acid chain; its full sequence is Large ribosomal subunit protein uL5c (180 aa).

The protein belongs to the universal ribosomal protein uL5 family. In terms of assembly, part of the 50S ribosomal subunit; contacts the 5S rRNA.

The protein localises to the plastid. Its subcellular location is the chloroplast. Its function is as follows. Binds 5S rRNA, forms part of the central protuberance of the 50S subunit. This chain is Large ribosomal subunit protein uL5c (rpl5), found in Tupiella akineta (Green alga).